Here is an 875-residue protein sequence, read N- to C-terminus: SPbeta prophage-derived uncharacterized protein YomG (875 aa).

Positions 351–381 (AKKAEISRINSQITNISQEIEKLKDRLSMDK) form a coiled coil. In terms of domain architecture, Fibronectin type-III spans 537–648 (PVANPTILNN…SIDSSGRILS (112 aa)).

This chain is SPbeta prophage-derived uncharacterized protein YomG (yomG), found in Bacillus subtilis (strain 168).